Reading from the N-terminus, the 681-residue chain is DNA ligase (681 aa).

NAD(+) contacts are provided by residues 42-46 (DAEYD), 91-92 (SL), and E120. K122 functions as the N6-AMP-lysine intermediate in the catalytic mechanism. Residues R143, E180, K302, and K326 each coordinate NAD(+). Positions 420, 423, 438, and 444 each coordinate Zn(2+). A BRCT domain is found at 603–681 (ADAQPLLGQT…EAGLIELIGL (79 aa)).

The protein belongs to the NAD-dependent DNA ligase family. LigA subfamily. Mg(2+) is required as a cofactor. Mn(2+) serves as cofactor.

It catalyses the reaction NAD(+) + (deoxyribonucleotide)n-3'-hydroxyl + 5'-phospho-(deoxyribonucleotide)m = (deoxyribonucleotide)n+m + AMP + beta-nicotinamide D-nucleotide.. Its function is as follows. DNA ligase that catalyzes the formation of phosphodiester linkages between 5'-phosphoryl and 3'-hydroxyl groups in double-stranded DNA using NAD as a coenzyme and as the energy source for the reaction. It is essential for DNA replication and repair of damaged DNA. This chain is DNA ligase, found in Shewanella amazonensis (strain ATCC BAA-1098 / SB2B).